Reading from the N-terminus, the 505-residue chain is Ribose import ATP-binding protein RbsA 1 (505 aa).

2 consecutive ABC transporter domains span residues 13 to 249 (LALR…VGRD) and 254 to 503 (YPKQ…TGRA). ATP is bound at residue 45-52 (GENGAGKS).

The protein belongs to the ABC transporter superfamily. Ribose importer (TC 3.A.1.2.1) family. In terms of assembly, the complex is composed of an ATP-binding protein (RbsA), two transmembrane proteins (RbsC) and a solute-binding protein (RbsB).

It localises to the cell membrane. The enzyme catalyses D-ribose(out) + ATP + H2O = D-ribose(in) + ADP + phosphate + H(+). Part of the ABC transporter complex RbsABC involved in ribose import. Responsible for energy coupling to the transport system. The chain is Ribose import ATP-binding protein RbsA 1 from Streptomyces coelicolor (strain ATCC BAA-471 / A3(2) / M145).